A 203-amino-acid polypeptide reads, in one-letter code: Holliday junction branch migration complex subunit RuvA (203 aa).

Residues 1–63 (MIFSVRGEVL…EDSMTLYGFS (63 aa)) form a domain I region. Residues 64–141 (DAENRDLFLA…GPVGASGLTV (78 aa)) form a domain II region. Positions 141-145 (VGTAA) are flexible linker. A domain III region spans residues 146–203 (DGNAVRGSVVEALVGLGFAAKQAEEATDQVLDGELGKDGAVATSSALRAALSLLGKTR).

The protein belongs to the RuvA family. As to quaternary structure, homotetramer. Forms an RuvA(8)-RuvB(12)-Holliday junction (HJ) complex. HJ DNA is sandwiched between 2 RuvA tetramers; dsDNA enters through RuvA and exits via RuvB. An RuvB hexamer assembles on each DNA strand where it exits the tetramer. Each RuvB hexamer is contacted by two RuvA subunits (via domain III) on 2 adjacent RuvB subunits; this complex drives branch migration. In the full resolvosome a probable DNA-RuvA(4)-RuvB(12)-RuvC(2) complex forms which resolves the HJ.

The protein localises to the cytoplasm. In terms of biological role, the RuvA-RuvB-RuvC complex processes Holliday junction (HJ) DNA during genetic recombination and DNA repair, while the RuvA-RuvB complex plays an important role in the rescue of blocked DNA replication forks via replication fork reversal (RFR). RuvA specifically binds to HJ cruciform DNA, conferring on it an open structure. The RuvB hexamer acts as an ATP-dependent pump, pulling dsDNA into and through the RuvAB complex. HJ branch migration allows RuvC to scan DNA until it finds its consensus sequence, where it cleaves and resolves the cruciform DNA. This Mycobacterium leprae (strain Br4923) protein is Holliday junction branch migration complex subunit RuvA.